A 441-amino-acid chain; its full sequence is Glutamyl-tRNA reductase (441 aa).

Residues 47 to 50 (TCNR), Ser-104, 109 to 111 (EAQ), and Gln-115 each bind substrate. Cys-48 serves as the catalytic Nucleophile. 184-189 (GAGEMG) is an NADP(+) binding site.

Belongs to the glutamyl-tRNA reductase family. In terms of assembly, homodimer.

It catalyses the reaction (S)-4-amino-5-oxopentanoate + tRNA(Glu) + NADP(+) = L-glutamyl-tRNA(Glu) + NADPH + H(+). It functions in the pathway porphyrin-containing compound metabolism; protoporphyrin-IX biosynthesis; 5-aminolevulinate from L-glutamyl-tRNA(Glu): step 1/2. Functionally, catalyzes the NADPH-dependent reduction of glutamyl-tRNA(Glu) to glutamate 1-semialdehyde (GSA). This is Glutamyl-tRNA reductase from Myxococcus xanthus (strain DK1622).